The primary structure comprises 87 residues: Retinal rod rhodopsin-sensitive cGMP 3',5'-cyclic phosphodiesterase subunit gamma (87 aa).

Methionine 1 bears the N-acetylmethionine mark. Over residues 1-12 (MNLEPPKAEIRS) the composition is skewed to basic and acidic residues. Positions 1–55 (MNLEPPKAEIRSATRVIGGPVTPRKGPPKFKQRQTRQFKSKPPKKGVQGFGDDIP) are disordered. Over residues 26–44 (GPPKFKQRQTRQFKSKPPK) the composition is skewed to basic residues.

The protein belongs to the rod/cone cGMP-PDE gamma subunit family. As to quaternary structure, oligomer composed of two catalytic chains (alpha and beta), an inhibitory chain (gamma) and the delta chain.

It catalyses the reaction 3',5'-cyclic GMP + H2O = GMP + H(+). Its function is as follows. Participates in processes of transmission and amplification of the visual signal. cGMP-PDEs are the effector molecules in G-protein-mediated phototransduction in vertebrate rods and cones. The sequence is that of Retinal rod rhodopsin-sensitive cGMP 3',5'-cyclic phosphodiesterase subunit gamma (PDE6G) from Canis lupus familiaris (Dog).